The sequence spans 370 residues: DNA primase large subunit PriL (370 aa).

Residues Cys230, Cys301, Cys310, and Cys317 each contribute to the [4Fe-4S] cluster site. A disordered region spans residues 337–370 (EGEEAQGKEQGKEKDDGKEKENGKESEVKKKKEK).

This sequence belongs to the eukaryotic-type primase large subunit family. Heterodimer of a small subunit (PriS) and a large subunit (PriL). The cofactor is [4Fe-4S] cluster.

Its function is as follows. Regulatory subunit of DNA primase, an RNA polymerase that catalyzes the synthesis of short RNA molecules used as primers for DNA polymerase during DNA replication. Stabilizes and modulates the activity of the small subunit, increasing the rate of DNA synthesis, and conferring RNA synthesis capability. The DNA polymerase activity may enable DNA primase to also catalyze primer extension after primer synthesis. May also play a role in DNA repair. This Methanosarcina mazei (strain ATCC BAA-159 / DSM 3647 / Goe1 / Go1 / JCM 11833 / OCM 88) (Methanosarcina frisia) protein is DNA primase large subunit PriL.